The chain runs to 955 residues: 2-oxoglutarate dehydrogenase E1 component (955 aa).

The protein belongs to the alpha-ketoglutarate dehydrogenase family. As to quaternary structure, homodimer. Part of the 2-oxoglutarate dehydrogenase (OGDH) complex composed of E1 (2-oxoglutarate dehydrogenase), E2 (dihydrolipoamide succinyltransferase) and E3 (dihydrolipoamide dehydrogenase); the complex contains multiple copies of the three enzymatic components (E1, E2 and E3). Requires thiamine diphosphate as cofactor.

The enzyme catalyses N(6)-[(R)-lipoyl]-L-lysyl-[protein] + 2-oxoglutarate + H(+) = N(6)-[(R)-S(8)-succinyldihydrolipoyl]-L-lysyl-[protein] + CO2. In terms of biological role, E1 component of the 2-oxoglutarate dehydrogenase (OGDH) complex which catalyzes the decarboxylation of 2-oxoglutarate, the first step in the conversion of 2-oxoglutarate to succinyl-CoA and CO(2). In Bacillus cereus (strain AH187), this protein is 2-oxoglutarate dehydrogenase E1 component.